Reading from the N-terminus, the 1711-residue chain is Receptor-type tyrosine-protein phosphatase V (1711 aa).

The first 17 residues, Met1–Leu17, serve as a signal peptide directing secretion. Topologically, residues Ala18–Ala1074 are extracellular. Fibronectin type-III domains lie at Pro37–Thr129, Val130–Asp222, Pro218–Tyr305, Pro306–Ser391, Ala393–Tyr470, Pro475–Thr569, Pro565–Thr654, Pro655–Glu749, Pro744–Val831, and Glu832–Ala926. N-linked (GlcNAc...) asparagine glycosylation is found at Asn42, Asn74, Asn89, Asn117, Asn174, Asn239, and Asn259. Asn431 carries an N-linked (GlcNAc...) asparagine glycan. Asn570, Asn620, Asn649, Asn663, and Asn737 each carry an N-linked (GlcNAc...) asparagine glycan. Residues Asn851, Asn882, Asn970, and Asn982 are each glycosylated (N-linked (GlcNAc...) asparagine). Residues Ile1075–Val1095 traverse the membrane as a helical segment. The Cytoplasmic portion of the chain corresponds to Leu1096–Cys1711. Tyrosine-protein phosphatase domains lie at Phe1150–Lys1409 and Asp1427–Ala1696. Residues Asp1316, Cys1350–Arg1356, and Gln1394 each bind substrate. The active-site Phosphocysteine intermediate is Cys1350.

This sequence belongs to the protein-tyrosine phosphatase family. Receptor class 3 subfamily. In terms of processing, the cytoplasmic domain contains potential phosphorylation sites. As to expression, bone and testis. In the latter, restricted to the basal portion of the seminiferous tubule.

It localises to the membrane. It carries out the reaction O-phospho-L-tyrosyl-[protein] + H2O = L-tyrosyl-[protein] + phosphate. Its function is as follows. Protein tyrosine phosphatase that acts as a regulator of energy metabolism. Prevents decarboxylation of osteocalcin (Bglap) via an indirect mechanism, preventing the hormone activity of osteocalcin. Functions in signaling pathways during bone remodeling, as well as serve a broader role in cell interactions associated with differentiation in bone and testis. Associated with differentiation in bone and testis. In Rattus norvegicus (Rat), this protein is Receptor-type tyrosine-protein phosphatase V (Ptprv).